The primary structure comprises 262 residues: Hydroxyethylthiazole kinase (262 aa).

Met-43 contacts substrate. ATP-binding residues include Arg-118 and Thr-164. Substrate is bound at residue Ala-191.

Belongs to the Thz kinase family. Mg(2+) serves as cofactor.

The catalysed reaction is 5-(2-hydroxyethyl)-4-methylthiazole + ATP = 4-methyl-5-(2-phosphooxyethyl)-thiazole + ADP + H(+). It participates in cofactor biosynthesis; thiamine diphosphate biosynthesis; 4-methyl-5-(2-phosphoethyl)-thiazole from 5-(2-hydroxyethyl)-4-methylthiazole: step 1/1. Its function is as follows. Catalyzes the phosphorylation of the hydroxyl group of 4-methyl-5-beta-hydroxyethylthiazole (THZ). The protein is Hydroxyethylthiazole kinase of Cereibacter sphaeroides (strain ATCC 17025 / ATH 2.4.3) (Rhodobacter sphaeroides).